Reading from the N-terminus, the 165-residue chain is Small ribosomal subunit protein uS5 (165 aa).

The 64-residue stretch at L13–I76 folds into the S5 DRBM domain.

The protein belongs to the universal ribosomal protein uS5 family. As to quaternary structure, part of the 30S ribosomal subunit. Contacts proteins S4 and S8.

Functionally, with S4 and S12 plays an important role in translational accuracy. In terms of biological role, located at the back of the 30S subunit body where it stabilizes the conformation of the head with respect to the body. The sequence is that of Small ribosomal subunit protein uS5 from Chlamydia abortus (strain DSM 27085 / S26/3) (Chlamydophila abortus).